Consider the following 95-residue polypeptide: Large ribosomal subunit protein bL25 (95 aa).

It belongs to the bacterial ribosomal protein bL25 family. In terms of assembly, part of the 50S ribosomal subunit; part of the 5S rRNA/L5/L18/L25 subcomplex. Contacts the 5S rRNA. Binds to the 5S rRNA independently of L5 and L18.

Functionally, this is one of the proteins that binds to the 5S RNA in the ribosome where it forms part of the central protuberance. The protein is Large ribosomal subunit protein bL25 of Mannheimia succiniciproducens (strain KCTC 0769BP / MBEL55E).